The primary structure comprises 329 residues: POU domain, class 5, transcription factor 2 (329 aa).

Polar residues predominate over residues 1-14; sequence MAGRRSSNVFPLSG. The tract at residues 1–24 is disordered; it reads MAGRRSSNVFPLSGNSGGGLEVDT. In terms of domain architecture, POU-specific spans 107-181; it reads DVSAIQKEME…LLKMWLEEVD (75 aa). The homeobox DNA-binding region spans 199-258; that stretch reads RKRRRASRERRIGSNLEKLFLQCPEPTPQQISYIAGRLRLQKDLVQVWFSNRSQMGSWPT.

The protein belongs to the POU transcription factor family. Class-5 subfamily. As to expression, in adult brain, expressed in the olfactory bulb, becoming specifically concentrated in the mitral cell layer. Also found in the pyramidal cell layer of the hippocampus, in the granule cell layer of the cerebellum and in the cortex.

It localises to the nucleus. Functionally, transcription factor that binds preferentially to the octamer motif (5'-ATGTTAAT-3'). May exert a regulatory function in meiotic events that are required for terminal differentiation of male germ cell. The polypeptide is POU domain, class 5, transcription factor 2 (Pou5f2) (Mus musculus (Mouse)).